Reading from the N-terminus, the 316-residue chain is Malate dehydrogenase (316 aa).

NAD(+) is bound by residues 12-17 (GAGNIG) and D36. The substrate site is built by R85 and R91. NAD(+) is bound by residues N98 and 121–123 (VTN). Substrate-binding residues include N123 and R154. Catalysis depends on H178, which acts as the Proton acceptor.

This sequence belongs to the LDH/MDH superfamily. MDH type 3 family.

It catalyses the reaction (S)-malate + NAD(+) = oxaloacetate + NADH + H(+). Functionally, catalyzes the reversible oxidation of malate to oxaloacetate. The polypeptide is Malate dehydrogenase (Wolbachia sp. subsp. Brugia malayi (strain TRS)).